A 1227-amino-acid chain; its full sequence is JNK-interacting protein 3 (1227 aa).

Residues 1–22 form a disordered region; it reads MMDNDDALLNNGGPQSGAETVY. Positions 25-113 constitute an RH1 domain; the sequence is EDNNMVMSEK…VTQYEREKSA (89 aa). Residues 84–191 are a coiled coil; the sequence is RINQEQDVEV…TELFKNHVDY (108 aa). Residues 281–323 are disordered; it reads DALQQQHHATSPQSPDSSPVVPNVPTNVGRSTTKKEQRSDNNL. Residues 290–308 are compositionally biased toward low complexity; sequence TSPQSPDSSPVVPNVPTNV. The stretch at 363 to 489 forms a coiled coil; sequence GKEVENLIME…EAVRLTEILR (127 aa). The 72-residue stretch at 453–524 folds into the RH2 domain; that stretch reads RKRFTRVEMA…PSNRPTERVA (72 aa). 3 disordered regions span residues 517–572, 804–851, and 863–889; these read NRPT…HPAS, GKVE…AEEP, and PLPGAPQRLSTDGNQTNNNNNSSSSSN. A compositionally biased stretch (gly residues) spans 526–540; that stretch reads GLGGGPMFRHTGGGS. Positions 541–550 are enriched in low complexity; sequence PAHSHGSPSR. Over residues 807–817 the composition is skewed to basic and acidic residues; sequence EFVRVKPKSDD. Positions 814–849 form a coiled coil; it reads KSDDEQNSNEKQQQEEEEAKEATEKSNEQLPAVSAE. Positions 879–889 are enriched in low complexity; that stretch reads NNNNNSSSSSN.

This sequence belongs to the JIP scaffold family. In terms of assembly, forms homo- and heterooligomeric complexes. Binds the TPR motif-containing C-terminal of kinesin light chain, Klc. Pre-assembled syd scaffolding complexes are then transported as a cargo of kinesin, to the required subcellular location.

The protein localises to the cytoplasm. Its function is as follows. The JNK-interacting protein (JIP) group of scaffold proteins selectively mediates JNK-signaling by aggregating specific components of the MAPK cascade to form a functional JNK signaling module. May function as a regulator of vesicle transport, through interactions with the JNK-signaling components and motor proteins. Syd is required for efficient kinesin-I mediated axonal transport. The chain is JNK-interacting protein 3 (syd) from Drosophila melanogaster (Fruit fly).